A 118-amino-acid polypeptide reads, in one-letter code: MTRVKRGNVARKRRNKILKLAKGFRGSHSRLFRTANQQVMKALRNAYRDRRKRKRDFRRLWIARINAASRLHGLSYSQLIGNLKKANVQLNRKMLAQLAVLDPVAFDQVVTVAAQTRR.

The protein belongs to the bacterial ribosomal protein bL20 family.

Its function is as follows. Binds directly to 23S ribosomal RNA and is necessary for the in vitro assembly process of the 50S ribosomal subunit. It is not involved in the protein synthesizing functions of that subunit. This Cyanothece sp. (strain PCC 7425 / ATCC 29141) protein is Large ribosomal subunit protein bL20.